The sequence spans 320 residues: Acetyl-coenzyme A carboxylase carboxyl transferase subunit alpha (320 aa).

The CoA carboxyltransferase C-terminal domain occupies 34-288 (RLEEALEAAR…GEALERVLAG (255 aa)).

Belongs to the AccA family. In terms of assembly, acetyl-CoA carboxylase is a heterohexamer composed of biotin carboxyl carrier protein (AccB), biotin carboxylase (AccC) and two subunits each of ACCase subunit alpha (AccA) and ACCase subunit beta (AccD).

It localises to the cytoplasm. It carries out the reaction N(6)-carboxybiotinyl-L-lysyl-[protein] + acetyl-CoA = N(6)-biotinyl-L-lysyl-[protein] + malonyl-CoA. It participates in lipid metabolism; malonyl-CoA biosynthesis; malonyl-CoA from acetyl-CoA: step 1/1. Functionally, component of the acetyl coenzyme A carboxylase (ACC) complex. First, biotin carboxylase catalyzes the carboxylation of biotin on its carrier protein (BCCP) and then the CO(2) group is transferred by the carboxyltransferase to acetyl-CoA to form malonyl-CoA. The polypeptide is Acetyl-coenzyme A carboxylase carboxyl transferase subunit alpha (Rubrobacter xylanophilus (strain DSM 9941 / JCM 11954 / NBRC 16129 / PRD-1)).